The sequence spans 908 residues: NADH-quinone oxidoreductase subunit G (908 aa).

One can recognise a 2Fe-2S ferredoxin-type domain in the interval 2–83 (ATIHVDGKEY…GTFISIDDEE (82 aa)). Residues Cys34, Cys45, Cys48, and Cys67 each contribute to the [2Fe-2S] cluster site. Residues 83 to 122 (EAKQFRESVVEWLMTNHPHDCPVCEEGGNCHLQDMTVMTG) form the 4Fe-4S His(Cys)3-ligated-type domain. [4Fe-4S] cluster is bound by residues His99, Cys103, Cys106, Cys112, Cys151, Cys154, Cys157, Cys201, Cys228, Cys231, Cys235, and Cys263. Residues 221–277 (MQFAPSICQQCSIGCNISPGERYGELRRIENRYNGTVNHYFLCDRGRFGYGYVNLKD) form the 4Fe-4S Mo/W bis-MGD-type domain.

Belongs to the complex I 75 kDa subunit family. Composed of 13 different subunits. Subunits NuoCD, E, F, and G constitute the peripheral sector of the complex. [2Fe-2S] cluster is required as a cofactor. It depends on [4Fe-4S] cluster as a cofactor.

The enzyme catalyses a quinone + NADH + 5 H(+)(in) = a quinol + NAD(+) + 4 H(+)(out). In terms of biological role, NDH-1 shuttles electrons from NADH, via FMN and iron-sulfur (Fe-S) centers, to quinones in the respiratory chain. The immediate electron acceptor for the enzyme in this species is believed to be ubiquinone. Couples the redox reaction to proton translocation (for every two electrons transferred, four hydrogen ions are translocated across the cytoplasmic membrane), and thus conserves the redox energy in a proton gradient. The protein is NADH-quinone oxidoreductase subunit G (nuoG) of Escherichia coli O157:H7.